Here is a 160-residue protein sequence, read N- to C-terminus: S-ribosylhomocysteine lyase (160 aa).

3 residues coordinate Fe cation: His57, His61, and Cys127.

Belongs to the LuxS family. Homodimer. Requires Fe cation as cofactor.

It carries out the reaction S-(5-deoxy-D-ribos-5-yl)-L-homocysteine = (S)-4,5-dihydroxypentane-2,3-dione + L-homocysteine. In terms of biological role, involved in the synthesis of autoinducer 2 (AI-2) which is secreted by bacteria and is used to communicate both the cell density and the metabolic potential of the environment. The regulation of gene expression in response to changes in cell density is called quorum sensing. Catalyzes the transformation of S-ribosylhomocysteine (RHC) to homocysteine (HC) and 4,5-dihydroxy-2,3-pentadione (DPD). This chain is S-ribosylhomocysteine lyase, found in Streptococcus pneumoniae (strain CGSP14).